Consider the following 419-residue polypeptide: Keratin, type I cytoskeletal 47 kDa (419 aa).

The interval 1-81 (MSFRSSSSYS…SSSFSNFGGN (81 aa)) is head. Residues 82–117 (DKQTMQNLNDRLASYLEKVRALEAANADLELKIREW) are coil 1A. The IF rod domain occupies 82–397 (DKQTMQNLND…RLLEGEFGSL (316 aa)). Residues 118-139 (YEKQKGSGIGAGSKDFSKYFEI) form a linker 1 region. Residues 140–231 (ISDLRNKILS…KNHEEEMSIA (92 aa)) are coil 1B. Residues 232 to 254 (KSSSAGQVNVEMDAAPGIDLNKI) are linker 12. Positions 255 to 393 (LSDMRADYET…ETYRRLLEGE (139 aa)) are coil 2. The segment at 394 to 419 (FGSLKSSIVQATEVSTSQSSSSSKKD) is tail.

Belongs to the intermediate filament family. Heterotetramer of two type I and two type II keratins.

The protein is Keratin, type I cytoskeletal 47 kDa (xk81b2) of Xenopus laevis (African clawed frog).